A 273-amino-acid chain; its full sequence is Exosporium protein C (273 aa).

It is found in the spore wall. The protein is Exosporium protein C of Clostridium sporogenes (strain ATCC 15579).